We begin with the raw amino-acid sequence, 596 residues long: Protein kinase C iota type (596 aa).

Residues 1–12 (MPTQRDSSTMSH) are compositionally biased toward polar residues. Residues 1–23 (MPTQRDSSTMSHTVAGGGSGDHS) are disordered. An N-acetylproline modification is found at Pro2. The segment at 2–28 (PTQRDSSTMSHTVAGGGSGDHSHQVRV) is required for interaction with RAB2. Residues 2–253 (PTQRDSSTMS…KASSSLGLQD (252 aa)) are regulatory domain. Thr3 bears the Phosphothreonine mark. Phosphoserine occurs at positions 7 and 8. Phosphothreonine is present on Thr9. Residues 25-108 (QVRVKAYYRG…SELLIHVFPC (84 aa)) form the PB1 domain. The interval 72 to 91 (DEEGDPCTVSSQLELEEAFR) is interaction with PARD6A. The short motif at 125-134 (YRRGARRWRK) is the Pseudosubstrate element. A Phorbol-ester/DAG-type zinc finger spans residues 140–190 (GHTFQAKRFNRRAHCAICTDRIWGLGRQGYKCINCKLLVHKKCHKLVTIEC). The interval 221-246 (PSSHESLDQVGEEKEAMNTRESGKAS) is disordered. Residues 225–243 (ESLDQVGEEKEAMNTRESG) show a composition bias toward basic and acidic residues. Residues 254–522 (FDLLRVIGRG…FADIQGHPFF (269 aa)) enclose the Protein kinase domain. An ATP-binding site is contributed by 260-268 (IGRGSYAKV). A phosphotyrosine; by SRC mark is found at Tyr265 and Tyr280. Lys283 contributes to the ATP binding site. Tyr334 is modified (phosphotyrosine; by SRC). Asp378 acts as the Proton acceptor in catalysis. At Thr412 the chain carries Phosphothreonine; by PDPK1. One can recognise an AGC-kinase C-terminal domain in the interval 523 to 594 (RNVDWDMMEQ…INPLLMSAEE (72 aa)). Thr564 is modified (phosphothreonine).

This sequence belongs to the protein kinase superfamily. AGC Ser/Thr protein kinase family. PKC subfamily. Forms a complex with SQSTM1 and MP2K5. Interacts directly with SQSTM1. Interacts with IKBKB. Interacts with PARD6A, PARD6B and PARD6G. Part of a quaternary complex containing aPKC, PARD3, a PARD6 protein (PARD6A, PARD6B or PARD6G) and a GTPase protein (CDC42 or RAC1). Part of a complex with LLGL1 and PARD6B. Interacts with ADAP1/CENTA1. Interaction with SMG1, through the ZN-finger domain, activates the kinase activity. Interacts with CDK7. Forms a complex with RAB2A and GAPDH involved in recruitment onto the membrane of vesicular tubular clusters (VTCs). Interacts with ECT2 ('Thr-359' phosphorylated form). Interacts with VAMP2. Interacts with WDFY2 (via WD repeats 1-3). Post-translationally, phosphorylation at Thr-412 in the activation loop is not mandatory for activation. Upon neuronal growth factor (NGF) stimulation, phosphorylated by SRC at Tyr-265, Tyr-280 and Tyr-334. Phosphorylation at Tyr-265 facilitates binding to KPNB1/importin-beta regulating entry of PRKCI into the nucleus. Phosphorylation on Tyr-334 is important for NF-kappa-B stimulation. Phosphorylated at Thr-564 during the initial phase of long term potentiation.

The protein resides in the cytoplasm. Its subcellular location is the membrane. The protein localises to the endosome. It is found in the nucleus. It carries out the reaction L-seryl-[protein] + ATP = O-phospho-L-seryl-[protein] + ADP + H(+). It catalyses the reaction L-threonyl-[protein] + ATP = O-phospho-L-threonyl-[protein] + ADP + H(+). Atypical PKCs (PRKCI and PRKCZ) exhibit an elevated basal enzymatic activity (that may be due to the interaction with SMG1 or SQSTM1) and are not regulated by diacylglycerol, phosphatidylserine, phorbol esters or calcium ions. Two specific sites, Thr-412 (activation loop of the kinase domain) and Thr-564 (turn motif), need to be phosphorylated for its full activation. Might also be a target for novel lipid activators that are elevated during nutrient-stimulated insulin secretion. Its function is as follows. Calcium- and diacylglycerol-independent serine/ threonine-protein kinase that plays a general protective role against apoptotic stimuli, is involved in NF-kappa-B activation, cell survival, differentiation and polarity, and contributes to the regulation of microtubule dynamics in the early secretory pathway. Is necessary for BCR-ABL oncogene-mediated resistance to apoptotic drug in leukemia cells, protecting leukemia cells against drug-induced apoptosis. In cultured neurons, prevents amyloid beta protein-induced apoptosis by interrupting cell death process at a very early step. In glioblastoma cells, may function downstream of phosphatidylinositol 3-kinase (PI(3)K) and PDPK1 in the promotion of cell survival by phosphorylating and inhibiting the pro-apoptotic factor BAD. Can form a protein complex in non-small cell lung cancer (NSCLC) cells with PARD6A and ECT2 and regulate ECT2 oncogenic activity by phosphorylation, which in turn promotes transformed growth and invasion. In response to nerve growth factor (NGF), acts downstream of SRC to phosphorylate and activate IRAK1, allowing the subsequent activation of NF-kappa-B and neuronal cell survival. Functions in the organization of the apical domain in epithelial cells by phosphorylating EZR. This step is crucial for activation and normal distribution of EZR at the early stages of intestinal epithelial cell differentiation. Forms a protein complex with LLGL1 and PARD6B independently of PARD3 to regulate epithelial cell polarity. Plays a role in microtubule dynamics in the early secretory pathway through interaction with RAB2A and GAPDH and recruitment to vesicular tubular clusters (VTCs). In human coronary artery endothelial cells (HCAEC), is activated by saturated fatty acids and mediates lipid-induced apoptosis. Involved in early synaptic long term potentiation phase in CA1 hippocampal cells and short term memory formation. The sequence is that of Protein kinase C iota type (PRKCI) from Pongo abelii (Sumatran orangutan).